We begin with the raw amino-acid sequence, 218 residues long: Peptide methionine sulfoxide reductase MsrA (218 aa).

A disordered region spans residues 1-28; that stretch reads MSFLDSYRKKTQMPSTDEALPGRAQPIP. The active site involves Cys57.

It belongs to the MsrA Met sulfoxide reductase family.

The enzyme catalyses L-methionyl-[protein] + [thioredoxin]-disulfide + H2O = L-methionyl-(S)-S-oxide-[protein] + [thioredoxin]-dithiol. The catalysed reaction is [thioredoxin]-disulfide + L-methionine + H2O = L-methionine (S)-S-oxide + [thioredoxin]-dithiol. Has an important function as a repair enzyme for proteins that have been inactivated by oxidation. Catalyzes the reversible oxidation-reduction of methionine sulfoxide in proteins to methionine. This Brucella anthropi (strain ATCC 49188 / DSM 6882 / CCUG 24695 / JCM 21032 / LMG 3331 / NBRC 15819 / NCTC 12168 / Alc 37) (Ochrobactrum anthropi) protein is Peptide methionine sulfoxide reductase MsrA.